The chain runs to 573 residues: Poly(ribitol-phosphate) beta-N-acetylglucosaminyltransferase TarS (573 aa).

UDP-N-acetyl-alpha-D-glucosamine is bound by residues Pro9, Asp41, Asn68, Arg76, 92 to 94 (DSD), Arg127, and Glu178. Asp94 is a binding site for Mn(2+). Asp179 (proton acceptor) is an active-site residue. Residues Arg207 and 211-213 (HMS) contribute to the UDP-N-acetyl-alpha-D-glucosamine site.

Belongs to the glycosyltransferase 2 family. In terms of assembly, homotrimer. The cofactor is Mn(2+).

It carries out the reaction 4-O-[(D-ribitylphospho)(n)-di{(2R)-glycerylphospho}]-N-acetyl-beta-D-mannosaminyl-(1-&gt;4)-N-acetyl-alpha-D-glucosaminyl di-trans,octa-cis-undecaprenyl diphosphate + n UDP-N-acetyl-alpha-D-glucosamine = 4-O-([2-N-acetyl-beta-D-glucosaminyl-1-D-ribitylphospho](n)-di{[2R]-1-glycerylphospho})-N-acetyl-beta-D-mannosaminyl-(1-&gt;4)-N-acetyl-alpha-D-glucosaminyl di-trans,octa-cis-undecaprenyl diphosphate + n UDP + n H(+). Its pathway is cell wall biogenesis; poly(ribitol phosphate) teichoic acid biosynthesis. Its function is as follows. Attaches beta-O-GlcNAc (beta-O-N-acetyl-D-glucosamine) residues to the C4 position of poly(RboP)-wall teichoic acids (WTAs). Prefers UDP-GlcNAc as a donor substrate and is specific for poly(ribitol phosphate) WTAs. Can also use UDP-Glc and UDP-GalNAc, but not UDP-galactose or UDP-glucuronic acid. Mediates beta-lactam resistance in methicillin resistant Staphylococcus aureus (MRSA) strains. This Staphylococcus aureus (strain MW2) protein is Poly(ribitol-phosphate) beta-N-acetylglucosaminyltransferase TarS.